We begin with the raw amino-acid sequence, 446 residues long: Citrate/sodium symporter (446 aa).

5 helical membrane passes run 23 to 43 (IFGMPLPLYAFALITLLLSHF), 46 to 66 (AIPTDLVGGFALMFVMGAIFG), 79 to 99 (IGGAPVMIFLVAAYFVYAGIF), 110 to 130 (VMDKSNFLNLFIAVLITGAIL), and 148 to 168 (ILAGIVGASLFGIVIGLCFGI). Ile-181 and Gly-183 together coordinate Na(+). Citrate is bound by residues Asn-186 and Gly-187. A run of 5 helical transmembrane segments spans residues 213–233 (IAILTIANIFAIIFAALLDMI), 267–287 (ETAVGMVLSTTCFLLAYVVAK), 289–309 (ILPSIGGVSIHYFAWMVLIVA), 335–355 (QLLWVLMVGVGVCYTDLQEII), and 364–384 (VIAAIIVVGAVVGAAIGGWLI). Na(+) contacts are provided by Met-399 and Asn-401. Residues Arg-402, Gly-404, Ser-405, and Arg-428 each coordinate citrate. Residues 425–445 (ISSRLGGGIVLVIASIVFSMM) traverse the membrane as a helical segment.

This sequence belongs to the 2-hydroxycarboxylate transporter (2-HCT) (TC 2.A.24) family. In terms of assembly, homodimer.

The protein resides in the cell inner membrane. The catalysed reaction is citrate(out) + 2 Na(+)(out) = citrate(in) + 2 Na(+)(in). In terms of biological role, secondary active transporter that catalyzes the uptake of citrate across the membrane with the concomitant uptake of sodium. Is specific for citrate. The sequence is that of Citrate/sodium symporter from Salmonella dublin.